Consider the following 353-residue polypeptide: Photosystem II D2 protein (353 aa).

N-acetylthreonine is present on T2. T2 is modified (phosphothreonine). A helical transmembrane segment spans residues 41 to 61 (CAYFAVGGWFTGTTFVTSWYT). H118 provides a ligand contact to chlorophyll a. The chain crosses the membrane as a helical span at residues 125–141 (GFMLRQFELARSVQLRP). Residues Q130 and N143 each coordinate pheophytin a. The helical transmembrane segment at 153 to 166 (VFVSVFLIYPLGQS) threads the bilayer. A chlorophyll a-binding site is contributed by H198. A helical membrane pass occupies residues 208 to 228 (AALLCAIHGATVENTLFEDGD). A plastoquinone contacts are provided by H215 and F262. H215 serves as a coordination point for Fe cation. A Fe cation-binding site is contributed by H269. Residues 279–295 (GLWMSALGVVGLALNLR) form a helical membrane-spanning segment.

This sequence belongs to the reaction center PufL/M/PsbA/D family. PSII is composed of 1 copy each of membrane proteins PsbA, PsbB, PsbC, PsbD, PsbE, PsbF, PsbH, PsbI, PsbJ, PsbK, PsbL, PsbM, PsbT, PsbX, PsbY, PsbZ, Psb30/Ycf12, at least 3 peripheral proteins of the oxygen-evolving complex and a large number of cofactors. It forms dimeric complexes. It depends on The D1/D2 heterodimer binds P680, chlorophylls that are the primary electron donor of PSII, and subsequent electron acceptors. It shares a non-heme iron and each subunit binds pheophytin, quinone, additional chlorophylls, carotenoids and lipids. There is also a Cl(-1) ion associated with D1 and D2, which is required for oxygen evolution. The PSII complex binds additional chlorophylls, carotenoids and specific lipids. as a cofactor.

The protein localises to the plastid. It localises to the chloroplast thylakoid membrane. The enzyme catalyses 2 a plastoquinone + 4 hnu + 2 H2O = 2 a plastoquinol + O2. Its function is as follows. Photosystem II (PSII) is a light-driven water:plastoquinone oxidoreductase that uses light energy to abstract electrons from H(2)O, generating O(2) and a proton gradient subsequently used for ATP formation. It consists of a core antenna complex that captures photons, and an electron transfer chain that converts photonic excitation into a charge separation. The D1/D2 (PsbA/PsbD) reaction center heterodimer binds P680, the primary electron donor of PSII as well as several subsequent electron acceptors. D2 is needed for assembly of a stable PSII complex. The chain is Photosystem II D2 protein from Ipomoea purpurea (Common morning glory).